The following is a 566-amino-acid chain: Putative sensory transducer protein YvaQ (566 aa).

The first 31 residues, 1 to 31 (MRLTISRKFSLVFLTLILINLLVGGIGVLNM), serve as a signal peptide directing secretion. A coiled-coil region spans residues 74–110 (DKSKMDTLDQEMNQIMEDINQKLDNYEKTISTDKEQK). The helical transmembrane segment at 186–206 (IYTALLVAASILISIFIWLYI) threads the bilayer. The 54-residue stretch at 208–261 (RNIVKPIIRMKESANHIAEGDLSNDMEALNSKDELGDLNEALQKMVGNLRDIVG) folds into the HAMP domain. The region spanning 280–530 (ATNETRSGSK…ESAAGIEETF (251 aa)) is the Methyl-accepting transducer domain. Residues 536–566 (SAHSMDQVLLNAEELEQLANELNEKMGQFTI) adopt a coiled-coil conformation.

The protein belongs to the methyl-accepting chemotaxis (MCP) protein family.

The protein localises to the cell membrane. Chemotactic-signal transducers respond to changes in the concentration of attractants and repellents in the environment, transduce a signal from the outside to the inside of the cell, and facilitate sensory adaptation through the variation of the level of methylation. Attractants increase the level of methylation while repellents decrease the level of methylation. This chain is Putative sensory transducer protein YvaQ (yvaQ), found in Bacillus subtilis (strain 168).